Here is a 447-residue protein sequence, read N- to C-terminus: Clusterin (447 aa).

Positions 1-21 are cleaved as a signal peptide; that stretch reads MKILLLCVALLLTWDNGMVLG. A Nuclear localization signal motif is present at residues 77-80; sequence KKKK. 5 cysteine pairs are disulfide-bonded: Cys-101–Cys-312, Cys-112–Cys-304, Cys-115–Cys-301, Cys-120–Cys-294, and Cys-128–Cys-284. Residue Asn-102 is glycosylated (N-linked (GlcNAc...) asparagine). Phosphoserine is present on Ser-132. N-linked (GlcNAc...) asparagine glycans are attached at residues Asn-144, Asn-290, Asn-327, Asn-353, and Asn-373. Phosphoserine is present on Ser-394. The short motif at 441–445 is the Nuclear localization signal element; it reads RRKSR.

The protein belongs to the clusterin family. Antiparallel disulfide-linked heterodimer of an alpha chain and a beta chain. Self-associates and forms higher oligomers. Interacts with a broad range of misfolded proteins, including APP, APOC2 and LYZ. Slightly acidic pH promotes interaction with misfolded proteins. Forms high-molecular weight oligomers upon interaction with misfolded proteins. Interacts with APOA1, LRP2, CLUAP1 and PON1. Interacts with the complement membrane attack complex. Interacts (via alpha chain) with XRCC6. Interacts with SYVN1, COMMD1, BTRC, CUL1 and with ubiquitin and SCF (SKP1-CUL1-F-box protein) E3 ubiquitin-protein ligase complexes. Interacts (via alpha chain) with BAX in stressed cells, where BAX undergoes a conformation change leading to association with the mitochondrial membrane. Does not interact with BAX in unstressed cells. Found in a complex with LTF, CLU, EPPIN and SEMG1. Interacts (immaturely glycosylated pre-secreted form) with HSPA5; this interaction promotes CLU stability and facilitates stress-induced CLU retrotranslocation from the secretory pathway to the mitochondria, thereby reducing stress-induced apoptosis by stabilizing mitochondrial membrane integrity. Interacts with BCL2L1; this interaction releases and activates BAX and promotes cell death. Interacts with TGFBR2 and ACVR1. Interacts (secreted form) with STMN3; this interaction may act as an important modulator during neuronal differentiation. Interacts with VLDLR and LRP8. In terms of processing, proteolytically cleaved on its way through the secretory system, probably within the Golgi lumen. Proteolytic cleavage is not necessary for its chaperone activity. All non-secreted forms are not proteolytically cleaved. Chaperone activity of uncleaved forms is dependent on a non-reducing environment. Post-translationally, polyubiquitinated, leading to proteasomal degradation. Under cellular stress, the intracellular level of cleaved form is reduced due to proteasomal degradation. Extensively glycosylated with sulfated N-linked carbohydrates. About 30% of the protein mass is comprised of complex N-linked carbohydrate. Endoplasmic reticulum (ER) stress induces changes in glycosylation status and increases level of hypoglycosylated forms. Core carbohydrates are essential for chaperone activity. Non-secreted forms are hypoglycosylated or unglycosylated. In terms of tissue distribution, detected in Sertoli cells (at protein level). Detected in cultured Sertoli cells, testis, epididymis, liver and brain.

The protein resides in the secreted. It localises to the nucleus. The protein localises to the cytoplasm. It is found in the mitochondrion membrane. Its subcellular location is the cytosol. The protein resides in the microsome. It localises to the endoplasmic reticulum. The protein localises to the mitochondrion. It is found in the perinuclear region. Its subcellular location is the cytoplasmic vesicle. The protein resides in the secretory vesicle. It localises to the chromaffin granule. Its function is as follows. Functions as extracellular chaperone that prevents aggregation of non native proteins. Prevents stress-induced aggregation of blood plasma proteins. Inhibits formation of amyloid fibrils by APP, APOC2, B2M, CALCA, CSN3, SNCA and aggregation-prone LYZ variants (in vitro). Does not require ATP. Maintains partially unfolded proteins in a state appropriate for subsequent refolding by other chaperones, such as HSPA8/HSC70. Does not refold proteins by itself. Binding to cell surface receptors triggers internalization of the chaperone-client complex and subsequent lysosomal or proteasomal degradation. When secreted, protects cells against apoptosis and against cytolysis by complement: inhibits assembly of the complement membrane attack complex (MAC) by preventing polymerization of C9 pore component of the MAC complex. Intracellular forms interact with ubiquitin and SCF (SKP1-CUL1-F-box protein) E3 ubiquitin-protein ligase complexes and promote the ubiquitination and subsequent proteasomal degradation of target proteins. Promotes proteasomal degradation of COMMD1 and IKBKB. Modulates NF-kappa-B transcriptional activity. Following stress, promotes apoptosis. Inhibits apoptosis when associated with the mitochondrial membrane by interference with BAX-dependent release of cytochrome c into the cytoplasm. Plays a role in the regulation of cell proliferation. An intracellular form suppresses stress-induced apoptosis by stabilizing mitochondrial membrane integrity through interaction with HSPA5. Secreted form does not affect caspase or BAX-mediated intrinsic apoptosis and TNF-induced NF-kappa-B-activity. Secreted form act as an important modulator during neuronal differentiation through interaction with STMN3. Plays a role in the clearance of immune complexes that arise during cell injury. In Rattus norvegicus (Rat), this protein is Clusterin.